Reading from the N-terminus, the 33-residue chain is Dolabellanin-B2 (33 aa).

Contains two disulfide bonds. In terms of processing, up to two of the methionines may be oxidized to methionine sulfoxides.

It is found in the secreted. Functionally, has antibacterial activity against Gram-negative bacteria E.coli JM109 and DH5-alpha, H.influenza IID 983, and V.vulnificus RIMD 2219009. Has antibacterial activity against Gram-positive bacteria S.aureus IID 1677, B.subtilis RIMD 0225014 and L.monocytogenes VIU206. Possesses antifungal activity against S.cerevisiae A581A, S.pombe IFO 1628, C.albicans ATCC 36232 and TIMM-1623, and C.tropicalis TIMM-0313. This is Dolabellanin-B2 from Dolabella auricularia (Shoulderblade sea cat).